The primary structure comprises 120 residues: NAD(P)H-quinone oxidoreductase subunit 3, chloroplastic (120 aa).

Helical transmembrane passes span 9–29, 64–84, and 88–108; these read IFWA…FISG, MFAL…PWAM, and VLGV…IVGL.

This sequence belongs to the complex I subunit 3 family. In terms of assembly, NDH is composed of at least 16 different subunits, 5 of which are encoded in the nucleus.

It localises to the plastid. The protein resides in the chloroplast thylakoid membrane. The enzyme catalyses a plastoquinone + NADH + (n+1) H(+)(in) = a plastoquinol + NAD(+) + n H(+)(out). It catalyses the reaction a plastoquinone + NADPH + (n+1) H(+)(in) = a plastoquinol + NADP(+) + n H(+)(out). Its function is as follows. NDH shuttles electrons from NAD(P)H:plastoquinone, via FMN and iron-sulfur (Fe-S) centers, to quinones in the photosynthetic chain and possibly in a chloroplast respiratory chain. The immediate electron acceptor for the enzyme in this species is believed to be plastoquinone. Couples the redox reaction to proton translocation, and thus conserves the redox energy in a proton gradient. In Guizotia abyssinica (Niger), this protein is NAD(P)H-quinone oxidoreductase subunit 3, chloroplastic.